A 354-amino-acid polypeptide reads, in one-letter code: Fructose-bisphosphate aldolase 2 (354 aa).

S50 provides a ligand contact to D-glyceraldehyde 3-phosphate. The active-site Proton donor is the D83. Zn(2+)-binding residues include H84, D105, E142, and H198. G199 contacts dihydroxyacetone phosphate. Zn(2+) is bound at residue H232. Residues 233–235 (GSS) and 275–278 (NIDT) each bind dihydroxyacetone phosphate.

Belongs to the class II fructose-bisphosphate aldolase family. Homodimer. The cofactor is Zn(2+).

It catalyses the reaction beta-D-fructose 1,6-bisphosphate = D-glyceraldehyde 3-phosphate + dihydroxyacetone phosphate. Its pathway is carbohydrate biosynthesis; Calvin cycle. It functions in the pathway carbohydrate degradation; glycolysis; D-glyceraldehyde 3-phosphate and glycerone phosphate from D-glucose: step 4/4. In terms of biological role, catalyzes the aldol condensation of dihydroxyacetone phosphate (DHAP or glycerone-phosphate) with glyceraldehyde 3-phosphate (G3P) to form fructose 1,6-bisphosphate (FBP) in gluconeogenesis and the reverse reaction in glycolysis. The sequence is that of Fructose-bisphosphate aldolase 2 (cfxB) from Cereibacter sphaeroides (Rhodobacter sphaeroides).